The sequence spans 2768 residues: Thyroglobulin (2768 aa).

A signal peptide spans 1–19 (MALVLEIFTLLASICWVSA). Tyr24 is subject to Iodotyrosine; alternate. Tyr24 carries the sulfotyrosine; alternate modification. Tyr24 carries the thyroxine; alternate modification. The residue at position 24 (Tyr24) is a Triiodothyronine; alternate. 4 consecutive Thyroglobulin type-1 domains span residues 31 to 92 (LRPC…PVAC), 93 to 160 (LSFC…PKRC), 161 to 297 (PRSC…RFRC), and 298 to 358 (PTKC…PPSC). 18 cysteine pairs are disulfide-bonded: Cys34/Cys52, Cys63/Cys70, Cys72/Cys92, Cys96/Cys120, Cys131/Cys138, Cys140/Cys160, Cys164/Cys183, Cys194/Cys235, Cys237/Cys297, Cys301/Cys319, Cys330/Cys336, Cys338/Cys358, Cys364/Cys620, Cys408/Cys608, Cys631/Cys636, Cys638/Cys658, Cys662/Cys687, and Cys698/Cys703. Asn76 carries an N-linked (GlcNAc...) asparagine glycan. Position 108 is an iodotyrosine (Tyr108). Asn110 is a glycosylation site (N-linked (GlcNAc...) asparagine). Tyr149 is subject to Iodotyrosine; alternate. Tyr149 is modified (diiodotyrosine; alternate). N-linked (GlcNAc...) asparagine glycosylation is present at Asn198. An iodotyrosine mark is found at Tyr234 and Tyr258. Residues Asn484 and Asn529 are each glycosylated (N-linked (GlcNAc...) asparagine). The disordered stretch occupies residues 521 to 545 (PLSVGLDSNSSTGTPEAAKKDGTMN). Thyroglobulin type-1 domains lie at 605–658 (SQTC…QPRC), 659–726 (PTDC…PKKC), 727–921 (PTPC…LPTC), 922–1073 (PGSC…IPQC), 1074–1145 (PTTC…SAQC), and 1146–1210 (PSLC…QPAC). Tyr704 carries the post-translational modification Iodotyrosine; alternate. Residue Tyr704 is modified to Thyroxine; alternate. Tyr704 carries the triiodothyronine; alternate modification. Tyr704 is modified (diiodotyrosine; alternate). Cystine bridges form between Cys705–Cys726, Cys730–Cys763, Cys774–Cys898, Cys900–Cys921, Cys925–Cys1031, Cys1042–Cys1049, Cys1051–Cys1073, Cys1077–Cys1108, Cys1126–Cys1145, Cys1149–Cys1169, Cys1181–Cys1188, Cys1190–Cys1210, Cys1215–Cys1264, Cys1231–Cys1245, Cys1306–Cys1356, and Cys1331–Cys1347. N-linked (GlcNAc...) asparagine glycosylation occurs at Asn748. The residue at position 785 (Tyr785) is an Iodotyrosine. N-linked (GlcNAc...) asparagine glycosylation occurs at Asn816. Tyr866 is subject to Iodotyrosine; alternate. At Tyr866 the chain carries Diiodotyrosine; alternate. Position 883 is a diiodotyrosine (Tyr883). N-linked (GlcNAc...) asparagine glycosylation occurs at Asn947. Tyr992 is subject to Iodotyrosine; alternate. Tyr992 carries the post-translational modification Diiodotyrosine; alternate. N-linked (GlcNAc...) asparagine glycosylation occurs at Asn1220. Residue Tyr1310 is modified to Iodotyrosine. Tyr1310 bears the Thyroxine mark. Residues Asn1348, Asn1349, and Asn1365 are each glycosylated (N-linked (GlcNAc...) asparagine). 9 cysteine pairs are disulfide-bonded: Cys1440-Cys1459, Cys1462-Cys1473, Cys1476-Cys1490, Cys1493-Cys1510, Cys1514-Cys1523, Cys1543-Cys1565, Cys1603-Cys1627, Cys1607-Cys1613, and Cys1639-Cys1662. 3 Type II repeats span residues 1456–1469 (GLGCVKCPEGSYSQ), 1470–1486 (DEECIPCPVGFYQEQAG), and 1487–1503 (SLACVPCPVGRTTISAG). Iodotyrosine; alternate is present on Tyr1467. Tyr1467 bears the Diiodotyrosine; alternate mark. The Thyroglobulin type-1 11 domain occupies 1511-1565 (VTDCQRNEAGLQCDQNGQYRASQKDRGSGKAFCVDGEGRRLPWWETEAPLEDSQC). The stretch at 1603-1723 (CLTDCTEDEA…GANLTDAHLF (121 aa)) is one Type IIIA repeat. Residue Asn1716 is glycosylated (N-linked (GlcNAc...) asparagine). Intrachain disulfides connect Cys1724–Cys1749, Cys1728–Cys1734, Cys1733–Cys1835, and Cys1760–Cys1777. Residues 1724–1892 (CLLACDRDLC…LFSAQQANLW (169 aa)) form a Type IIIB repeat. Residues Asn1774 and Asn1869 are each glycosylated (N-linked (GlcNAc...) asparagine). Intrachain disulfides connect Cys1893–Cys1919, Cys1897–Cys1904, Cys1928–Cys1939, Cys1996–Cys2024, Cys2000–Cys2006, Cys2005–Cys2076, and Cys2035–Cys2048. Residues 1893 to 1995 (CLSRCVQEHS…EKSISNGFFE (103 aa)) form a Type IIIA repeat. The Type IIIB repeat unit spans residues 1996-2129 (CERRCDADPC…TSNFSAVRDL (134 aa)). Asn2013 carries an N-linked (GlcNAc...) asparagine glycan. The N-linked (GlcNAc...) asparagine glycan is linked to Asn2122. Disulfide bonds link Cys2130/Cys2154, Cys2134/Cys2140, and Cys2163/Cys2172. Residues 2130–2187 (CLSECSQHEACLITTLQTQPGAVRCMFYADTQSCTHSLQGQNCRLLLREEATHIYRKP) form a Type IIIA repeat. Iodotyrosine is present on Tyr2184. The tract at residues 2188 to 2768 (GISLLSYEAS…QEPGSKTYSK (581 aa)) is cholinesterase-like (ChEL). A glycan (N-linked (GlcNAc...) asparagine) is linked at Asn2250. An intrachain disulfide couples Cys2264 to Cys2281. A glycan (N-linked (GlcNAc...) asparagine) is linked at Asn2295. Residues Cys2442 and Cys2453 are joined by a disulfide bond. An Iodotyrosine modification is found at Tyr2540. Tyr2573 carries the iodotyrosine; alternate modification. Tyr2573 carries the thyroxine; alternate modification. Triiodothyronine; alternate is present on Tyr2573. Residue Tyr2573 is modified to Diiodotyrosine; alternate. An N-linked (GlcNAc...) asparagine glycan is attached at Asn2582. Iodotyrosine occurs at positions 2587 and 2617. An intrachain disulfide couples Cys2591 to Cys2715. Tyr2697 is modified (diiodotyrosine). Residues 2727-2768 (TSADGAKGGQSAESEEEELTAGSGLREDLLSLQEPGSKTYSK) are disordered. O-linked (Xyl...) (chondroitin sulfate) serine glycosylation occurs at Ser2749. Tyr2766 is subject to Iodotyrosine; alternate. Position 2766 is a thyroxine; alternate (Tyr2766). Residue Tyr2766 is modified to Triiodothyronine; alternate. Tyr2766 is subject to Diiodotyrosine; alternate.

It belongs to the type-B carboxylesterase/lipase family. In terms of assembly, monomer. Homodimer (via ChEL region); occurs in the endoplasmic reticulum and is required for export to the Golgi apparatus. Homooligomer; disulfide-linked; stored in this form in the thyroid follicle lumen. Post-translationally, iodinated on tyrosine residues by TPO. There are 4 pairs of iodinated tyrosines used for coupling: acceptor Tyr-24 is coupled to donor Tyr-149 or Tyr-234, acceptor Tyr-2573 is coupled to donor Tyr-2540, acceptor Tyr-2766 in monomer 1 is coupled to donor Tyr-2766 in monomer 2 and acceptor Tyr-1310 in monomer 1 is coupled to donor Tyr-108 in monomer 2. Sulfated tyrosines are desulfated during iodination. In terms of processing, undergoes sequential proteolysis by cathepsins to release thyroxine (T4) and triiodothyronine (T3) hormones. In the thyroid follicle lumen, cross-linked TG (storage form) is solubilized by limited proteolysis mediated by cathepsins CTSB and/or CTSL. Partially cleaved TG is further processed by CTSK/cathepsin K and/or CTSL resulting in the release of T4. Following endocytosis, further processing occurs leading to the release of T3 and more T4 hormones. In terms of tissue distribution, specifically expressed in the thyroid gland.

The protein localises to the secreted. Acts as a substrate for the production of iodinated thyroid hormones thyroxine (T4) and triiodothyronine (T3). The synthesis of T3 and T4 involves iodination of selected tyrosine residues of TG/thyroglobulin followed by their oxidative coupling in the thyroid follicle lumen. Following TG re-internalization and lysosomal-mediated proteolysis, T3 and T4 are released from the polypeptide backbone leading to their secretion into the bloodstream. One dimer produces 7 thyroid hormone molecules. The polypeptide is Thyroglobulin (Homo sapiens (Human)).